A 50-amino-acid polypeptide reads, in one-letter code: Temporin-SHa (50 aa).

Positions 1 to 10 (FLGTINLSLC) are cleaved as a signal peptide. Positions 11 to 35 (EQERDADEEERRDEPNESNVEVEKR) are excised as a propeptide. Phe48 bears the Phenylalanine amide mark.

Belongs to the frog skin active peptide (FSAP) family. Temporin subfamily. As to expression, expressed by the skin glands.

The protein localises to the secreted. Its subcellular location is the target cell membrane. Functionally, amphipathic alpha-helical antimicrobial peptide with highly potent activity against Gram-positive bacteria, and potent activity Gram-negative bacteria and fungi (MIC=2-30 uM). Acts through membranolytic mechanism involving rapid membrane permeabilization and depolarization. Shows a direct extra-cellular antiviral activity probably through degradation of the viral envelope. Also shows a weak indirect antiviral activity by inhibiting virus replication. Also displays anti-trypanosoma and anti-leishmania (prosmastigotes and axenic amastigotes) activity through membranolytic mechanism. Also induces apoptosis in leishmania promastigotes at high peptide concentrations. Shows moderate hemolytic activity (LC(50)=25 uM). In contrast to many antibiotics, this peptide does not induce bacterial resistance. This Pelophylax saharicus (Sahara frog) protein is Temporin-SHa.